The chain runs to 479 residues: Transcription factor CP2-like protein 1 (479 aa).

Positions 1–52 (MLFWHTQPEHYNQHNSGSYLRDVLALPIFKQEEPQLSPENGARLPPLQYVLC) are mediate transcriptional repression. One can recognise a Grh/CP2 DB domain in the interval 43-280 (RLPPLQYVLC…PSPSYNGSPN (238 aa)). Disordered regions lie at residues 219–248 (KPKGADRKQKTDREKMEKRTAQEKEKYQPS) and 260–301 (WPDV…LPLG). Residues 221–245 (KGADRKQKTDREKMEKRTAQEKEKY) are compositionally biased toward basic and acidic residues. Residues 261 to 365 (PDVPYQANNT…IRLFNAIKGR (105 aa)) form an SAM2-like domain region. Residues 266 to 292 (QANNTPSPSYNGSPNSFGLREGNSSPN) show a composition bias toward polar residues.

Belongs to the grh/CP2 family. CP2 subfamily. In terms of assembly, forms homohexamers via its SAM-like domain. Interacts with Mta1; which is indispensable for Tfcp2l1-mediated self-renewal-promoting effect and endoderm-inhibiting action. In terms of tissue distribution, highly expressed in placenta, testis, small intestine, kidney and stomach. Low levels of expression in lung, mesenteric lymph nodes, muscle, ovary, and thymus. No expression was detected in brain, heart, liver, and spleen. Expressed in eccrine glands in the palm. Expression is prominent in both kidney collecting ducts intercalated (IC) and principal (PC) cells. Also expressed in the thick limb of Henle and connecting segments of the nephron.

The protein localises to the nucleus. In terms of biological role, transcription factor that facilitates establishment and maintenance of pluripotency in embryonic stem cells (ESCs). With Klf2, acts as the major effector of self-renewal that mediates induction of pluripotency downstream of LIF/Stat3 and Wnt/beta-catenin signaling. Required for normal duct development in the salivary gland and kidney. Coordinates the development of the kidney collecting ducts intercalated (IC) and principal (PC) cells, which regulate acid-base and salt-water homeostasis, respectively. Regulates the expression of IC genes including subunits B1 and D2 of the V-ATPase complex, Oxgr1, Ca12, Slc4a1, Aqp6 and IC-specific transcription factor Foxi1. Also regulates the expression of Jag1 and subsequent notch signaling in the collecting duct. Jag1 initiates notch signaling in PCs but inhibits notch signaling in ICs. Acts as a transcriptional suppressor that may suppress UBP1-mediated transcriptional activation. Modulates the placental expression of CYP11A1. This Mus musculus (Mouse) protein is Transcription factor CP2-like protein 1 (Tfcp2l1).